Consider the following 570-residue polypeptide: Adenine deaminase 2 (570 aa).

Belongs to the metallo-dependent hydrolases superfamily. Adenine deaminase family. Mn(2+) is required as a cofactor.

It catalyses the reaction adenine + H2O + H(+) = hypoxanthine + NH4(+). The polypeptide is Adenine deaminase 2 (Carboxydothermus hydrogenoformans (strain ATCC BAA-161 / DSM 6008 / Z-2901)).